The primary structure comprises 351 residues: Hydroxymethylglutaryl-CoA synthase (351 aa).

Glutamate 80 serves as the catalytic Proton donor/acceptor. Cysteine 112 serves as the catalytic Acyl-thioester intermediate. 2 residues coordinate (3S)-3-hydroxy-3-methylglutaryl-CoA: cysteine 112 and serine 153. Arginine 199 contacts CoA. Residues threonine 201 and histidine 234 each contribute to the (3S)-3-hydroxy-3-methylglutaryl-CoA site. Residue histidine 234 is the Proton donor/acceptor of the active site. Lysine 239 serves as a coordination point for CoA. 3 residues coordinate (3S)-3-hydroxy-3-methylglutaryl-CoA: arginine 243, asparagine 266, and serine 296.

The protein belongs to the thiolase-like superfamily. Archaeal HMG-CoA synthase family. As to quaternary structure, interacts with acetoacetyl-CoA thiolase that catalyzes the precedent step in the pathway and with a DUF35 protein. The acetoacetyl-CoA thiolase/HMG-CoA synthase complex channels the intermediate via a fused CoA-binding site, which allows for efficient coupling of the endergonic thiolase reaction with the exergonic HMGCS reaction.

It carries out the reaction acetoacetyl-CoA + acetyl-CoA + H2O = (3S)-3-hydroxy-3-methylglutaryl-CoA + CoA + H(+). Its pathway is metabolic intermediate biosynthesis; (R)-mevalonate biosynthesis; (R)-mevalonate from acetyl-CoA: step 2/3. Catalyzes the condensation of acetyl-CoA with acetoacetyl-CoA to form 3-hydroxy-3-methylglutaryl-CoA (HMG-CoA). Functions in the mevalonate (MVA) pathway leading to isopentenyl diphosphate (IPP), a key precursor for the biosynthesis of isoprenoid compounds that are building blocks of archaeal membrane lipids. This chain is Hydroxymethylglutaryl-CoA synthase, found in Thermoplasma volcanium (strain ATCC 51530 / DSM 4299 / JCM 9571 / NBRC 15438 / GSS1).